A 213-amino-acid polypeptide reads, in one-letter code: MRSGVIAQKVGMTRVYNDAGEHVPVTVLRMDGCQVVATRTVEKNGYTAVQLGAGQAKVKNTSKAMRGNFAVANVEPKAKVAEFRVSEDQLLEIGTEIKAGHFAAGQLVDVTGTTIGKGFAGAMKRHGFGGLRATHGVSVSHRSHGSTGSRQDPGKVFKNKKMAGHMGQTRVTTQNLEVVSTDEDRGLILIKGAVPGSKGAWIIVRDAVKSAAK.

At Gln-151 the chain carries N5-methylglutamine.

It belongs to the universal ribosomal protein uL3 family. Part of the 50S ribosomal subunit. Forms a cluster with proteins L14 and L19. In terms of processing, methylated by PrmB.

In terms of biological role, one of the primary rRNA binding proteins, it binds directly near the 3'-end of the 23S rRNA, where it nucleates assembly of the 50S subunit. This Rhizobium leguminosarum bv. trifolii (strain WSM2304) protein is Large ribosomal subunit protein uL3.